The primary structure comprises 392 residues: MKRESSTQLRAGFTTGTCAAAAAKGAALMLRDQCLCDQVTLRLPTGISATFRLEGQEFSSSSASCFVVKDAGDDPDITNGAELHARVTVPPPLPLAQGDMVEITGGTGIGRATKPGLAVAPGEWAINPVPRRMIQEAVGEVFADRRVLVQISIPDGELRAQKTLNARLGILGGLSILGTTGIVRPISAKAWTDTIDTALDVARACGCATVVFSTGRTSELAAQEWLKVRGARFDFGDQESGNADREPGTMYLEPLPEEAFVMMGDHVAHALRSARERGFHQPVIACQYAKLVKIACGYENTHAAASDMDLARLRAWAVEAELPSRVVETIASANTAREIAVSTGFDPALLTLTARKALQASQGHATGAHPLFVVADYGGRIVFHSLPAENNA.

This sequence belongs to the CbiD family.

It carries out the reaction Co-precorrin-5B + S-adenosyl-L-methionine = Co-precorrin-6A + S-adenosyl-L-homocysteine. It participates in cofactor biosynthesis; adenosylcobalamin biosynthesis; cob(II)yrinate a,c-diamide from sirohydrochlorin (anaerobic route): step 6/10. Catalyzes the methylation of C-1 in cobalt-precorrin-5B to form cobalt-precorrin-6A. The sequence is that of Cobalt-precorrin-5B C(1)-methyltransferase from Pelobacter propionicus (strain DSM 2379 / NBRC 103807 / OttBd1).